Consider the following 181-residue polypeptide: Inner membrane-spanning protein YciB (181 aa).

5 helical membrane-spanning segments follow: residues Leu3–Tyr23, Ser54–Ile74, Ile81–Ile101, Leu119–Tyr139, and Phe149–Leu169.

The protein belongs to the YciB family.

It is found in the cell inner membrane. Functionally, plays a role in cell envelope biogenesis, maintenance of cell envelope integrity and membrane homeostasis. This Legionella pneumophila (strain Corby) protein is Inner membrane-spanning protein YciB.